A 237-amino-acid polypeptide reads, in one-letter code: Ribonuclease PH (237 aa).

Phosphate contacts are provided by residues arginine 86 and 124–126; that span reads GTR.

This sequence belongs to the RNase PH family. Homohexameric ring arranged as a trimer of dimers.

It catalyses the reaction tRNA(n+1) + phosphate = tRNA(n) + a ribonucleoside 5'-diphosphate. In terms of biological role, phosphorolytic 3'-5' exoribonuclease that plays an important role in tRNA 3'-end maturation. Removes nucleotide residues following the 3'-CCA terminus of tRNAs; can also add nucleotides to the ends of RNA molecules by using nucleoside diphosphates as substrates, but this may not be physiologically important. Probably plays a role in initiation of 16S rRNA degradation (leading to ribosome degradation) during starvation. This is Ribonuclease PH from Shewanella pealeana (strain ATCC 700345 / ANG-SQ1).